Here is a 416-residue protein sequence, read N- to C-terminus: Serine hydroxymethyltransferase (416 aa).

(6S)-5,6,7,8-tetrahydrofolate contacts are provided by residues leucine 118 and 122 to 124 (GHL). Lysine 226 carries the post-translational modification N6-(pyridoxal phosphate)lysine. Residues glutamate 242 and 350–352 (SPF) each bind (6S)-5,6,7,8-tetrahydrofolate.

The protein belongs to the SHMT family. In terms of assembly, homodimer. The cofactor is pyridoxal 5'-phosphate.

It is found in the cytoplasm. The catalysed reaction is (6R)-5,10-methylene-5,6,7,8-tetrahydrofolate + glycine + H2O = (6S)-5,6,7,8-tetrahydrofolate + L-serine. It participates in one-carbon metabolism; tetrahydrofolate interconversion. The protein operates within amino-acid biosynthesis; glycine biosynthesis; glycine from L-serine: step 1/1. Functionally, catalyzes the reversible interconversion of serine and glycine with tetrahydrofolate (THF) serving as the one-carbon carrier. This reaction serves as the major source of one-carbon groups required for the biosynthesis of purines, thymidylate, methionine, and other important biomolecules. Also exhibits THF-independent aldolase activity toward beta-hydroxyamino acids, producing glycine and aldehydes, via a retro-aldol mechanism. The sequence is that of Serine hydroxymethyltransferase from Helicobacter acinonychis (strain Sheeba).